Here is a 37-residue protein sequence, read N- to C-terminus: Large ribosomal subunit protein bL36 (37 aa).

This sequence belongs to the bacterial ribosomal protein bL36 family.

The protein is Large ribosomal subunit protein bL36 of Leptospira interrogans serogroup Icterohaemorrhagiae serovar Lai (strain 56601).